The sequence spans 1371 residues: MMEEYQEINKILHEIDDGNTKRKVQLVKNKKDGKLYVCKTIDFNNNNETKDSKVKREREYLFLKQYSSPSFSHLNIAKYIKHFETRDNHGYLQKLTIIIEYYEGGDLTNLKNLNEVLPKDIIYLFFTMLVILKEFKNSIIHRDIKPENIFFVKNGPDLEFYLGDMGSSSMVITDQKNTLIGTNQYMAPEIDLGGYTCKVDIYSLGKTMLSLITLVHSPMNSIFESLFQLCTLENFKIRPSIDQLIEFVCRQYDQSRYTISLSSYTHPNTRSIIKYFKDKKFNILKEGEKINFKIDIQSKFYNCISVYRGFAYNEYIVEEEEKEKEEYQKEENQQSIPNVLSIVELIQPPLQDLSKDFENVLINHINYIRDGGINGSIRSLLHPDIIIKTKCDRVKGFEIKAHSNITNTEGLFIENAHLIYKPVNLSWKKIFLEREDEITPDVQLKAVFLSLLVAFKISNDENDFLTGTLFDKLMEHIYFVKSPSLPPPSQISPIKEPLSSYELKISFPFNHRAHIYGVKVPLNPNYLNLFFGGEIKDTLISNLIQTLNILAPNNLQYKSILIKLISIILKEEKRILKSYSNLGLEIYFKEFNEIIKNEIALEGIVSDKLLVSKIDTTKKIEKIRGFRNGHSNSDADIYISEFKGKYYAIDKFEHIPGLFEILEPFSNKAIDDFNQHFKFISTFVDVNESFGLVYTIFELPSSLINSYQTTRKSCENKNILDKDKTFRNLLNQHLSYYQNIQNNRYKLNGTDLTSKKLSFTEYQYNIIISNDCDIHYYFSFVGKNGSGLVQSFFDIGAWVYGDENVKKIKVLSFFYLLQCLFDYQTKNTHNSVDIDFPNILYYLKKFYYSSLVDYGLNGMDSSSKIFNYDLNNSYSFIKIGFLIYNILDLYKPNIIPDQTLYYDSDLIVMLLENSSNKFLCFRKQYYSDLDKTKLKLTPENIVPQNNDNDNSIILLPLLIIKDDITSFHFFDYNLKDSIKTIEDFNNEKECLLYYLQNIQKNPSNANSLVLINLNLFEENESTDNESFLFFDIFYLIKQLHGLSTIIDSWDNFISSLSKPISLVSNYIQTNLKKILDDPLSIDILYNDESMSHFKPFIYDKIKEIKKNVWLIRDKNNNNYIRKLSGYIKSKFKEVEKYGFEFIDDVSISNPYLKIAVENGWPISFLSSHFKRDNSNLFDYLFNKELIILELLKEKGVDGISQLESYFVENNIIYILTKYHGDYSNLEEINELNQEDLFEILVQMSDKLKILESLQIYHRDIKPENILFKREIVNGNIQSKVCLIDFSISDFGFILKTNESGSKMYQAPEIYQEEYRSKENDITNQHYKLDIYSLGFTLSHLMKKFNCNPPSLVQIVKKMIKHKAFLLKQPTL.

2 Protein kinase domains span residues 9–269 and 1131–1371; these read NKIL…HPNT and FKEV…QPTL. Residues 15–23 and K39 each bind ATP; that span reads IDDGNTKRK. D143 functions as the Proton acceptor in the catalytic mechanism.

It belongs to the protein kinase superfamily. Ser/Thr protein kinase family.

It catalyses the reaction L-seryl-[protein] + ATP = O-phospho-L-seryl-[protein] + ADP + H(+). The enzyme catalyses L-threonyl-[protein] + ATP = O-phospho-L-threonyl-[protein] + ADP + H(+). The polypeptide is Probable serine/threonine-protein kinase DDB_G0293292 (Dictyostelium discoideum (Social amoeba)).